A 345-amino-acid chain; its full sequence is Uroporphyrinogen decarboxylase (345 aa).

Substrate-binding positions include 27–31 (RQAGR), Phe-46, Asp-76, Tyr-152, Ser-207, and His-321.

Belongs to the uroporphyrinogen decarboxylase family. In terms of assembly, homodimer.

The protein localises to the cytoplasm. The enzyme catalyses uroporphyrinogen III + 4 H(+) = coproporphyrinogen III + 4 CO2. It participates in porphyrin-containing compound metabolism; protoporphyrin-IX biosynthesis; coproporphyrinogen-III from 5-aminolevulinate: step 4/4. Functionally, catalyzes the decarboxylation of four acetate groups of uroporphyrinogen-III to yield coproporphyrinogen-III. The polypeptide is Uroporphyrinogen decarboxylase (Staphylococcus aureus (strain MRSA252)).